The primary structure comprises 227 residues: Cytidylate kinase (227 aa).

12-20 (GPSGAGKGT) is an ATP binding site.

It belongs to the cytidylate kinase family. Type 1 subfamily.

The protein localises to the cytoplasm. The catalysed reaction is CMP + ATP = CDP + ADP. The enzyme catalyses dCMP + ATP = dCDP + ADP. This Enterobacter sp. (strain 638) protein is Cytidylate kinase.